The chain runs to 219 residues: Probable GTP-binding protein EngB (219 aa).

The EngB-type G domain occupies 31-205 (VGVEIAFAGR…LSILNEWCHP (175 aa)). GTP contacts are provided by residues 39–46 (GRSNAGKS), 66–70 (GRTQL), 84–87 (DLPG), 151–154 (TKSD), and 184–186 (FSA). Residues S46 and T68 each contribute to the Mg(2+) site.

It belongs to the TRAFAC class TrmE-Era-EngA-EngB-Septin-like GTPase superfamily. EngB GTPase family. Mg(2+) serves as cofactor.

Its function is as follows. Necessary for normal cell division and for the maintenance of normal septation. This is Probable GTP-binding protein EngB from Shewanella sp. (strain MR-7).